The primary structure comprises 161 residues: Chaperone protein dnaJ 11, chloroplastic (161 aa).

Residues Met1 to Pro18 show a composition bias toward low complexity. The segment at Met1–Arg31 is disordered. The N-terminal 36 residues, Met1–Leu36, are a transit peptide targeting the chloroplast. Residues Ser65 to Met133 form the J domain.

Belongs to the DnaJ family. C/III subfamily. In terms of tissue distribution, expressed in roots, stems, leaves, flowers and developing siliques.

The protein localises to the plastid. It localises to the chloroplast stroma. Functionally, plays a continuous role in plant development probably in the structural organization of compartments. This is Chaperone protein dnaJ 11, chloroplastic (ATJ11) from Arabidopsis thaliana (Mouse-ear cress).